Here is a 362-residue protein sequence, read N- to C-terminus: UDP-N-acetylglucosamine--N-acetylmuramyl-(pentapeptide) pyrophosphoryl-undecaprenol N-acetylglucosamine transferase (362 aa).

UDP-N-acetyl-alpha-D-glucosamine contacts are provided by residues 15–17 (TGG), Asn127, Arg165, Ser191, Ile247, 266–271 (ALTVSE), and Gln292.

The protein belongs to the glycosyltransferase 28 family. MurG subfamily.

It is found in the cell inner membrane. The enzyme catalyses di-trans,octa-cis-undecaprenyl diphospho-N-acetyl-alpha-D-muramoyl-L-alanyl-D-glutamyl-meso-2,6-diaminopimeloyl-D-alanyl-D-alanine + UDP-N-acetyl-alpha-D-glucosamine = di-trans,octa-cis-undecaprenyl diphospho-[N-acetyl-alpha-D-glucosaminyl-(1-&gt;4)]-N-acetyl-alpha-D-muramoyl-L-alanyl-D-glutamyl-meso-2,6-diaminopimeloyl-D-alanyl-D-alanine + UDP + H(+). It participates in cell wall biogenesis; peptidoglycan biosynthesis. Functionally, cell wall formation. Catalyzes the transfer of a GlcNAc subunit on undecaprenyl-pyrophosphoryl-MurNAc-pentapeptide (lipid intermediate I) to form undecaprenyl-pyrophosphoryl-MurNAc-(pentapeptide)GlcNAc (lipid intermediate II). The chain is UDP-N-acetylglucosamine--N-acetylmuramyl-(pentapeptide) pyrophosphoryl-undecaprenol N-acetylglucosamine transferase from Shewanella putrefaciens (strain CN-32 / ATCC BAA-453).